We begin with the raw amino-acid sequence, 498 residues long: Protein MGF 505-5R (498 aa).

Belongs to the asfivirus MGF 505 family.

Plays a role in virus cell tropism, and may be required for efficient virus replication in macrophages. The chain is Protein MGF 505-5R from African swine fever virus (strain Badajoz 1971 Vero-adapted) (Ba71V).